Reading from the N-terminus, the 361-residue chain is NAD(P)H-quinone oxidoreductase subunit 1, chloroplastic (361 aa).

The next 7 helical transmembrane spans lie at 28–48 (IWVL…VLVI), 99–119 (FTIG…VIPF), 128–148 (LSIG…GLLM), 249–269 (YSGI…LVSS), 270–290 (LFVT…LFVP), 301–321 (TIIC…ISIA), and 341–361 (FLLP…LLSL).

The protein belongs to the complex I subunit 1 family. NDH is composed of at least 16 different subunits, 5 of which are encoded in the nucleus.

Its subcellular location is the plastid. It is found in the chloroplast thylakoid membrane. The catalysed reaction is a plastoquinone + NADH + (n+1) H(+)(in) = a plastoquinol + NAD(+) + n H(+)(out). It catalyses the reaction a plastoquinone + NADPH + (n+1) H(+)(in) = a plastoquinol + NADP(+) + n H(+)(out). Its function is as follows. NDH shuttles electrons from NAD(P)H:plastoquinone, via FMN and iron-sulfur (Fe-S) centers, to quinones in the photosynthetic chain and possibly in a chloroplast respiratory chain. The immediate electron acceptor for the enzyme in this species is believed to be plastoquinone. Couples the redox reaction to proton translocation, and thus conserves the redox energy in a proton gradient. The chain is NAD(P)H-quinone oxidoreductase subunit 1, chloroplastic from Jasminum nudiflorum (Winter jasmine).